The sequence spans 280 residues: Dexamethasone-induced Ras-related protein 1 (280 aa).

Residue C11 is modified to S-nitrosocysteine. 31-38 serves as a coordination point for GTP; it reads GSSKVGKT. The short motif at 53–61 is the Effector region element; that stretch reads YTPTIEDFH. Residues 78–82 and 145–148 each bind GTP; these read DTSGN and NKGD. C277 is modified (cysteine methyl ester). C277 carries the S-farnesyl cysteine lipid modification. Positions 278–280 are cleaved as a propeptide — removed in mature form; sequence VIS.

This sequence belongs to the small GTPase superfamily. RasD family. In terms of assembly, forms a ternary complex with CAPON and NOS1. Component of a complex, at least composed of APBB1, RASD1/DEXRAS1 and APP. Interacts with APBB1/FE65. Forms. Post-translationally, S-nitrosylation stimulates guanine-nucleotide exchange activity. Prominently found in brain at both mRNA and protein levels. Moderate expression in testis and lung. Slightly expressed in heart, spleen, skeletal muscle, liver and kidney.

The protein resides in the cell membrane. The protein localises to the cytoplasm. It is found in the perinuclear region. Its subcellular location is the nucleus. Its function is as follows. Small GTPase. Negatively regulates the transcription regulation activity of the APBB1/FE65-APP complex via its interaction with APBB1/FE65. The polypeptide is Dexamethasone-induced Ras-related protein 1 (Rasd1) (Rattus norvegicus (Rat)).